Here is a 295-residue protein sequence, read N- to C-terminus: Cutinase 11 (295 aa).

Positions 1–17 are cleaved as a signal peptide; the sequence is MQTSALLLAAQALVASA. A disulfide bridge links Cys-25 with Cys-102. Residues Ser-113, Asp-198, and His-210 contribute to the active site. A disulfide bridge connects residues Cys-184 and Cys-202. Positions 228-258 are disordered; it reads KLNSGGSPPTTPPTTPPTTPPTTPPTTPPPS. Over residues 236 to 258 the composition is skewed to pro residues; it reads PTTPPTTPPTTPPTTPPTTPPPS. Residues 260-295 enclose the CBM1 domain; that stretch reads SCAALYGQCGGQGWNGATCCSQGTCRASNQWYSQCL.

The protein belongs to the cutinase family. In terms of processing, the 2 disulfide bonds play a critical role in holding the catalytic residues in juxta-position; reduction of the disulfide bridges results in the complete inactivation of the enzyme.

The protein localises to the secreted. It carries out the reaction cutin + H2O = cutin monomers.. Catalyzes the hydrolysis of complex carboxylic polyesters found in the cell wall of plants. May degrade cutin, a macromolecule that forms the structure of the plant cuticle. May also degrade suberin, a specialized macromolecule found in the cell wall of various plant tissues. Allows pathogenic fungi to penetrate through the cuticular barrier into the host plant during the initial stage of fungal infection. Involved in pathogenesis. This chain is Cutinase 11, found in Verticillium dahliae (Verticillium wilt).